A 177-amino-acid polypeptide reads, in one-letter code: Inner membrane-spanning protein YciB (177 aa).

Transmembrane regions (helical) follow at residues 22–42, 50–70, 76–96, 121–141, and 149–169; these read IFIASGSLIVISGLICIIHWI, ISLFSFLSVFFFGSLTIFFHN, WKITIIYIIFSLVLLISQFFT, FIWSLFFLFCAILNIYIAYYF, and FKVFGFTSLTFFLILITSIYI.

It belongs to the YciB family.

The protein localises to the cell inner membrane. In terms of biological role, plays a role in cell envelope biogenesis, maintenance of cell envelope integrity and membrane homeostasis. This chain is Inner membrane-spanning protein YciB, found in Buchnera aphidicola subsp. Acyrthosiphon pisum (strain APS) (Acyrthosiphon pisum symbiotic bacterium).